The sequence spans 1180 residues: Protocadherin-12 (1180 aa).

Positions 1-17 (MMLLLPFLLGLLGPGSY) are cleaved as a signal peptide. Residues 18-716 (LFISGDCQEV…HEPGVLSTPA (699 aa)) lie on the Extracellular side of the membrane. Cadherin domains lie at 28–135 (ATVM…QPQF), 136–244 (PKDE…SPVF), 245–352 (AESS…APSI), 355–460 (TWAS…APVF), and 461–565 (EKSR…APEV). N-linked (GlcNAc...) asparagine glycans are attached at residues N265 and N415. N-linked (GlcNAc...) asparagine glycosylation is found at N582, N659, and N662. In terms of domain architecture, Cadherin 6 spans 600–711 (PAGTGIPPKA…LRDSAHEPGV (112 aa)). Residues 717–737 (LALICLAVLLAIFGLLLALFV) form a helical membrane-spanning segment. Over 738 to 1180 (SICRTERKDN…ESRLGCGRNL (443 aa)) the chain is Cytoplasmic. 2 disordered regions span residues 857-930 (NASR…GPHQ) and 973-1026 (QFQP…PEED). A Phosphoserine modification is found at S859. Residues 904-918 (PASSATLRRQRNFNG) are compositionally biased toward polar residues. Positions 1014–1026 (PDLEEGPPSPEED) are enriched in acidic residues. S1064 carries the post-translational modification Phosphoserine. A compositionally biased stretch (polar residues) spans 1076 to 1093 (SSPDATTSEEPRTFQTFG). Disordered regions lie at residues 1076 to 1104 (SSPDATTSEEPRTFQTFGKTVGPGPELSP) and 1156 to 1180 (SGASASEAQGRKKAAESRLGCGRNL).

Post-translationally, N-glycosylated. Cleaved by ADAM10 close to the transmembrane domain to release the Protocadherin-12, secreted form in the serum. Cleavage results in reduced cellular adhesion in a cell migration assay. As to expression, expressed in endothelial cells: localizes in vasculogenic rather than angiogenic endothelium. Strongly expressed in a subset of invasive cells of the placenta, named glycogen-rich trophoblasts cells (at protein level). glycogen-rich trophoblasts cells originate from the from the ectoplacental cone where they rapidly form tight islets (at protein level). In adult mice, present at high level in mesangial cells of kidney glomeruli, while expression was not detected in other types of perivascular cells.

It localises to the cell membrane. The protein resides in the cell junction. Its subcellular location is the secreted. Cellular adhesion molecule that may play an important role in cell-cell interactions at interendothelial junctions. Acts as a regulator of cell migration, probably via increasing cell-cell adhesion. Promotes homotypic calcium-dependent aggregation and adhesion and clusters at intercellular junctions. Unable to bind to catenins, weakly associates with the cytoskeleton. This is Protocadherin-12 from Mus musculus (Mouse).